A 432-amino-acid chain; its full sequence is Small ribosomal subunit protein uS5m (432 aa).

The segment at 110-130 (AGARKGRGKRTKKKKRKDLNR) is disordered. Over residues 113–127 (RKGRGKRTKKKKRKD) the composition is skewed to basic residues. The 65-residue stretch at 220 to 284 (FDTRILEVRN…NRAIHYLHYI (65 aa)) folds into the S5 DRBM domain.

It belongs to the universal ribosomal protein uS5 family. In terms of assembly, component of the mitochondrial ribosome small subunit (28S) which comprises a 12S rRNA and about 30 distinct proteins.

The protein resides in the mitochondrion. This chain is Small ribosomal subunit protein uS5m (Mrps5), found in Mus musculus (Mouse).